The following is a 160-amino-acid chain: 3-dehydroquinate dehydratase (160 aa).

Tyr28 (proton acceptor) is an active-site residue. Substrate-binding residues include Asn79, His85, and Asp92. The active-site Proton donor is His105. Substrate-binding positions include 106 to 107 (MS) and Arg116.

The protein belongs to the type-II 3-dehydroquinase family. In terms of assembly, homododecamer.

It carries out the reaction 3-dehydroquinate = 3-dehydroshikimate + H2O. It participates in metabolic intermediate biosynthesis; chorismate biosynthesis; chorismate from D-erythrose 4-phosphate and phosphoenolpyruvate: step 3/7. In terms of biological role, catalyzes a trans-dehydration via an enolate intermediate. This Gloeobacter violaceus (strain ATCC 29082 / PCC 7421) protein is 3-dehydroquinate dehydratase.